The following is a 338-amino-acid chain: Ferrochelatase (338 aa).

Fe cation-binding residues include His189 and Glu293.

This sequence belongs to the ferrochelatase family.

It is found in the cytoplasm. It catalyses the reaction heme b + 2 H(+) = protoporphyrin IX + Fe(2+). It functions in the pathway porphyrin-containing compound metabolism; protoheme biosynthesis; protoheme from protoporphyrin-IX: step 1/1. Catalyzes the ferrous insertion into protoporphyrin IX. The chain is Ferrochelatase from Azotobacter vinelandii (strain DJ / ATCC BAA-1303).